Reading from the N-terminus, the 412-residue chain is Divalent metal cation transporter MntH (412 aa).

A run of 11 helical transmembrane segments spans residues 19–39 (FALMGPAFIAAIGYIDPGNFA), 46–66 (ASFGYKLLWVVVWANLMAMLI), 94–114 (VWFYWVQAEIIAMATDLAEFI), 122–142 (LILGVSLLQGAVLTGIATFLI), 155–175 (LVIGGLLLFVAAAYIVELVFS), 196–216 (AVFLAAGVLGATIMPHVIYLH), 241–261 (IAMTIAGFVNLAMMATAAAAF), 290–310 (IFGLSLVAAGLSSTVVGTLAG), 329–349 (SVTMMPSFIVILMGLDPTRIL), 350–370 (VMSQVLLSFGIALALVPLLIF), and 389–409 (IGWMIVVLVVALNLWLLIGTL).

Belongs to the NRAMP family.

The protein resides in the cell inner membrane. Functionally, h(+)-stimulated, divalent metal cation uptake system. This Enterobacter sp. (strain 638) protein is Divalent metal cation transporter MntH.